Consider the following 96-residue polypeptide: Small ribosomal subunit protein bS6 (96 aa).

Belongs to the bacterial ribosomal protein bS6 family.

Its function is as follows. Binds together with bS18 to 16S ribosomal RNA. In Streptococcus equi subsp. zooepidemicus (strain MGCS10565), this protein is Small ribosomal subunit protein bS6.